The sequence spans 439 residues: Proline--tRNA ligase (439 aa).

Belongs to the class-II aminoacyl-tRNA synthetase family. ProS type 2 subfamily. Homodimer.

It is found in the cytoplasm. It carries out the reaction tRNA(Pro) + L-proline + ATP = L-prolyl-tRNA(Pro) + AMP + diphosphate. Its function is as follows. Catalyzes the attachment of proline to tRNA(Pro) in a two-step reaction: proline is first activated by ATP to form Pro-AMP and then transferred to the acceptor end of tRNA(Pro). The sequence is that of Proline--tRNA ligase from Parvibaculum lavamentivorans (strain DS-1 / DSM 13023 / NCIMB 13966).